Here is a 424-residue protein sequence, read N- to C-terminus: N-succinylarginine dihydrolase (424 aa).

Substrate contacts are provided by residues 19–28, Asn110, and 137–138; these read AGLSRGNVAS and HR. Glu174 is an active-site residue. Substrate is bound at residue Arg206. His242 is an active-site residue. Substrate contacts are provided by Asp244 and Asn351. Cys357 serves as the catalytic Nucleophile.

The protein belongs to the succinylarginine dihydrolase family. As to quaternary structure, homodimer.

The catalysed reaction is N(2)-succinyl-L-arginine + 2 H2O + 2 H(+) = N(2)-succinyl-L-ornithine + 2 NH4(+) + CO2. Its pathway is amino-acid degradation; L-arginine degradation via AST pathway; L-glutamate and succinate from L-arginine: step 2/5. In terms of biological role, catalyzes the hydrolysis of N(2)-succinylarginine into N(2)-succinylornithine, ammonia and CO(2). The sequence is that of N-succinylarginine dihydrolase from Zymomonas mobilis subsp. mobilis (strain ATCC 31821 / ZM4 / CP4).